The following is a 28-amino-acid chain: Cruzioseptin-10 (28 aa).

Expressed by the skin glands.

The protein localises to the secreted. Its function is as follows. Has antimicrobial activity. The protein is Cruzioseptin-10 of Cruziohyla calcarifer (Splendid leaf frog).